A 496-amino-acid chain; its full sequence is 4-O-methyl-glucuronoyl methylesterase 1 (496 aa).

An N-terminal signal peptide occupies residues 1–19 (MKSTVASALLVLAGTAVQA). The CBM1 domain maps to 20-55 (QSGPWQQCGGIGWQGPFTCVSGHTCQVLNDWYHQCV). The interval 57-151 (GGGPSPPPTS…RLPDPFTFHN (95 aa)) is disordered. Residues 59–125 (GPSPPPTSPP…SPPPTSPPPS (67 aa)) show a composition bias toward pro residues. 3 disulfides stabilise this stretch: C129-C163, C307-C443, and C339-C415. Positions 306–311 (GCSRNG) match the GXSYXG catalytic site motif motif. S308 acts as the Nucleophile in catalysis. 4 residues coordinate substrate: K312, Q354, E362, and W406. H442 functions as the Proton donor/acceptor in the catalytic mechanism.

It belongs to the carbohydrate esterase 15 (CE15) family.

It localises to the secreted. The enzyme catalyses a 4-O-methyl-alpha-D-glucuronosyl ester derivative + H2O = 4-O-methyl-alpha-D-glucuronate derivative + an alcohol + H(+). Glucuronoyl esterase which may play a significant role in biomass degradation, as it is considered to disconnect hemicellulose from lignin through the hydrolysis of the ester bond between 4-O-methyl-D-glucuronic acid residues of glucuronoxylans and aromatic alcohols of lignin. Cleaves native lignin-carbohydrate (LC) ester bonds from LC complex preparations of spruce (softwood) and birch (hardwood), containing mainly hemicelluloses with partially acetylated glucomannans in spruce and partially acetylated xylan in birch. Can hydrolyze benzyl glucuronic acid (BnGlcA), allyl glucuronic acid (allylGlcA) and to a lower degree methyl glucuronic acid (MeGlcA) in vitro. This is 4-O-methyl-glucuronoyl methylesterase 1 from Sodiomyces alcalophilus (Acremonium alcalophilum).